Reading from the N-terminus, the 400-residue chain is Acetate kinase (400 aa).

A Mg(2+)-binding site is contributed by Asn-10. ATP is bound at residue Lys-17. Arg-91 serves as a coordination point for substrate. Residue Asp-150 is the Proton donor/acceptor of the active site. ATP contacts are provided by residues 210–214 (HLGNG), 285–287 (DCR), and 333–337 (GIGEN). Position 387 (Glu-387) interacts with Mg(2+).

This sequence belongs to the acetokinase family. In terms of assembly, homodimer. Mg(2+) serves as cofactor. Mn(2+) is required as a cofactor.

It localises to the cytoplasm. It catalyses the reaction acetate + ATP = acetyl phosphate + ADP. The protein operates within metabolic intermediate biosynthesis; acetyl-CoA biosynthesis; acetyl-CoA from acetate: step 1/2. Functionally, catalyzes the formation of acetyl phosphate from acetate and ATP. Can also catalyze the reverse reaction. The protein is Acetate kinase of Escherichia coli O157:H7.